Consider the following 319-residue polypeptide: ATP-dependent 6-phosphofructokinase (319 aa).

Residue Gly11 coordinates ATP. 21–25 contacts ADP; that stretch reads RAVVR. ATP is bound by residues 72-73 and 102-105; these read RC and GDGS. Asp103 contributes to the Mg(2+) binding site. Residue 125–127 coordinates substrate; that stretch reads TID. The active-site Proton acceptor is Asp127. Arg154 provides a ligand contact to ADP. 169 to 171 is a binding site for substrate; that stretch reads MGR. ADP is bound by residues 185 to 187, Arg211, and 213 to 215; these read GAE and KKH. Substrate contacts are provided by residues Glu222, Arg243, and 249–252; that span reads HIQR.

This sequence belongs to the phosphofructokinase type A (PFKA) family. ATP-dependent PFK group I subfamily. Prokaryotic clade 'B1' sub-subfamily. Homotetramer. Mg(2+) serves as cofactor.

The protein localises to the cytoplasm. It catalyses the reaction beta-D-fructose 6-phosphate + ATP = beta-D-fructose 1,6-bisphosphate + ADP + H(+). The protein operates within carbohydrate degradation; glycolysis; D-glyceraldehyde 3-phosphate and glycerone phosphate from D-glucose: step 3/4. Allosterically activated by ADP and other diphosphonucleosides, and allosterically inhibited by phosphoenolpyruvate. In terms of biological role, catalyzes the phosphorylation of D-fructose 6-phosphate to fructose 1,6-bisphosphate by ATP, the first committing step of glycolysis. This Lysinibacillus sphaericus (Bacillus sphaericus) protein is ATP-dependent 6-phosphofructokinase.